The sequence spans 236 residues: SPbeta prophage-derived uncharacterized lipoprotein YokB (236 aa).

An N-terminal signal peptide occupies residues 1–19; the sequence is MNIRFSMLVCVSFIFFTGG. Cys-20 is lipidated: N-palmitoyl cysteine. The S-diacylglycerol cysteine moiety is linked to residue Cys-20. Disordered stretches follow at residues 23–59 and 204–236; these read SSAN…TPNM and VKKV…KDNK. Residues 31-53 are compositionally biased toward basic and acidic residues; it reads SKNKNESKEESSEEGVKENDNKL.

It is found in the cell membrane. This is SPbeta prophage-derived uncharacterized lipoprotein YokB (yokB) from Bacillus subtilis (strain 168).